Consider the following 229-residue polypeptide: Trypsin (229 aa).

The propeptide at 1 to 7 is activation peptide; it reads APDDDDK. The Peptidase S1 domain occupies 8–227; it reads IVGGYECPKH…YVSWIHETIA (220 aa). 6 disulfides stabilise this stretch: Cys-14-Cys-143, Cys-32-Cys-48, Cys-116-Cys-216, Cys-123-Cys-189, Cys-154-Cys-168, and Cys-179-Cys-203. The Charge relay system role is filled by His-47. The Ca(2+) site is built by Glu-59 and Glu-69. The active-site Charge relay system is Asp-91. The active-site Charge relay system is the Ser-183.

The protein belongs to the peptidase S1 family. The cofactor is Ca(2+).

The protein resides in the secreted. The protein localises to the extracellular space. It carries out the reaction Preferential cleavage: Arg-|-Xaa, Lys-|-Xaa.. The protein is Trypsin of Squalus acanthias (Spiny dogfish).